Here is a 258-residue protein sequence, read N- to C-terminus: tRNA pseudouridine synthase A (258 aa).

The Nucleophile role is filled by Asp52. Substrate is bound at residue Tyr110.

The protein belongs to the tRNA pseudouridine synthase TruA family. Homodimer.

The enzyme catalyses uridine(38/39/40) in tRNA = pseudouridine(38/39/40) in tRNA. Functionally, formation of pseudouridine at positions 38, 39 and 40 in the anticodon stem and loop of transfer RNAs. The protein is tRNA pseudouridine synthase A of Francisella tularensis subsp. tularensis (strain FSC 198).